We begin with the raw amino-acid sequence, 624 residues long: Actin-related protein 8 (624 aa).

Methionine 1 is modified (N-acetylmethionine). Positions 1-25 are enriched in basic and acidic residues; that stretch reads MTQAEKGDAENGKEKGGEKEKEQRG. The tract at residues 1-29 is disordered; sequence MTQAEKGDAENGKEKGGEKEKEQRGVKRP. The ATP site is built by serine 55 and threonine 56. A Phosphoserine modification is found at serine 132. 283-286 contacts ATP; it reads DVGD. Serine 412 is subject to Phosphoserine. The interval 430-460 is disordered; it reads SKQEQSAKATADRKSASKPIGFEGDLRGQSS.

This sequence belongs to the actin family. ARP8 subfamily. In terms of assembly, component of the chromatin remodeling INO80 complex; specifically part of a complex module associated with the DBINO domain of INO80. Exists as monomers and dimers, but the dimer is most probably the biologically relevant form required for stable interactions with histones that exploits the twofold symmetry of the nucleosome core.

It is found in the nucleus. The protein resides in the chromosome. Its function is as follows. Plays an important role in the functional organization of mitotic chromosomes. Exhibits low basal ATPase activity, and unable to polymerize. Proposed core component of the chromatin remodeling INO80 complex which is involved in transcriptional regulation, DNA replication and probably DNA repair. Required for the recruitment of INO80 (and probably the INO80 complex) to sites of DNA damage Strongly prefer nucleosomes and H3-H4 tetramers over H2A-H2B dimers, suggesting it may act as a nucleosome recognition module within the complex. The protein is Actin-related protein 8 (ACTR8) of Ailuropoda melanoleuca (Giant panda).